We begin with the raw amino-acid sequence, 498 residues long: ATP synthase subunit beta, chloroplastic (498 aa).

Residue 172 to 179 coordinates ATP; that stretch reads GGAGVGKT.

The protein belongs to the ATPase alpha/beta chains family. In terms of assembly, F-type ATPases have 2 components, CF(1) - the catalytic core - and CF(0) - the membrane proton channel. CF(1) has five subunits: alpha(3), beta(3), gamma(1), delta(1), epsilon(1). CF(0) has four main subunits: a(1), b(1), b'(1) and c(9-12).

The protein localises to the plastid. It localises to the chloroplast thylakoid membrane. It carries out the reaction ATP + H2O + 4 H(+)(in) = ADP + phosphate + 5 H(+)(out). Produces ATP from ADP in the presence of a proton gradient across the membrane. The catalytic sites are hosted primarily by the beta subunits. In Platanus occidentalis (Sycamore), this protein is ATP synthase subunit beta, chloroplastic.